Here is a 542-residue protein sequence, read N- to C-terminus: CTP synthase (542 aa).

Positions 1–265 (MTRYIFVTGG…DDIVVERFGL (265 aa)) are amidoligase domain. Ser-13 is a CTP binding site. Position 13 (Ser-13) interacts with UTP. ATP is bound by residues 14-19 (SLGKGI) and Asp-71. Residues Asp-71 and Glu-139 each coordinate Mg(2+). Residues 146 to 148 (DIE), 186 to 191 (KTKPTQ), and Lys-222 each bind CTP. UTP-binding positions include 186–191 (KTKPTQ) and Lys-222. In terms of domain architecture, Glutamine amidotransferase type-1 spans 290–541 (TIAMVGKYME…VNAALKYSGK (252 aa)). Residue Gly-351 participates in L-glutamine binding. Cys-378 (nucleophile; for glutamine hydrolysis) is an active-site residue. L-glutamine-binding positions include 379 to 382 (LGMQ), Glu-402, and Arg-469. Residues His-514 and Glu-516 contribute to the active site.

Belongs to the CTP synthase family. As to quaternary structure, homotetramer.

It catalyses the reaction UTP + L-glutamine + ATP + H2O = CTP + L-glutamate + ADP + phosphate + 2 H(+). The enzyme catalyses L-glutamine + H2O = L-glutamate + NH4(+). The catalysed reaction is UTP + NH4(+) + ATP = CTP + ADP + phosphate + 2 H(+). Its pathway is pyrimidine metabolism; CTP biosynthesis via de novo pathway; CTP from UDP: step 2/2. Its activity is regulated as follows. Allosterically activated by GTP, when glutamine is the substrate; GTP has no effect on the reaction when ammonia is the substrate. The allosteric effector GTP functions by stabilizing the protein conformation that binds the tetrahedral intermediate(s) formed during glutamine hydrolysis. Inhibited by the product CTP, via allosteric rather than competitive inhibition. Functionally, catalyzes the ATP-dependent amination of UTP to CTP with either L-glutamine or ammonia as the source of nitrogen. Regulates intracellular CTP levels through interactions with the four ribonucleotide triphosphates. The chain is CTP synthase from Pseudomonas aeruginosa (strain LESB58).